The following is a 446-amino-acid chain: Chromosomal replication initiator protein DnaA (446 aa).

The segment at 1–82 (MENILDLWNQ…ELSIKFVIPQ (82 aa)) is domain I, interacts with DnaA modulators. The interval 83–103 (NQDVEDFMPKPQVKKAVKEDT) is domain II. The segment at 104–332 (SDFPQNMLNP…VAYSSLINKD (229 aa)) is domain III, AAA+ region. G154, L155, G156, K157, and T158 together coordinate ATP. Residue T158 participates in Mg(2+) binding. Residues 182–206 (SEKFTNEFINSIRDNKAVDFRNRYR) carry the Initiator specific motif (ISM) motif. Positions 214 and 215 each coordinate Mg(2+). The linker stretch occupies residues 333–346 (INADLAAEALKDII). A domain IV, binds dsDNA region spans residues 347 to 446 (PSSKPKVITI…HVKEIKEQLK (100 aa)).

It belongs to the DnaA family. As to quaternary structure, the DNA replisome assembles sequentially on oriC in this order; DnaA, DnaD, DnaB, DnaI-DnaC helicase. Oligomerizes as a right-handed, spiral filament on DNA at oriC. Forms an ATP-dependent helix on DNA at oriC; both DnaD and YabA inhibit formation of the DnaA helix. Forms an ATP-dependent oligomer, formation is stimulated by ds- and ssDNA; monomeric ADP-Soj inhibits oligomer formation. Interacts with DnaD. Interacts with YabA, and via YabA, with the replication machinery subunit beta sliding clamp DnaN. Interacts with YabA via domain IIIa (residues 109-275). Isolated domain I forms a 1:1 complex with SirA. Interacts with Soj, probably via domain III. Interacts via domains I and III with CcrZ. Interacts via domain IV with skin prophage-like element protein YqaH.

The protein resides in the cytoplasm. It is found in the nucleoid. The enzyme catalyses ATP + H2O = ADP + phosphate + H(+). Its activity is regulated as follows. Oligomerization of DnaA can be controlled by Soj; monomeric ADP-Soj inhibits formation of the DnaA helix. YabA prevents the cooperative binding of DnaA-ATP to oriC-containing sequences; increased levels of DnaN (beta sliding clamp subunit of DNA polymerase) removes YabA from association with DnaA on the chromosome, enabling increased association of DnaA with its chromosomal binding sites. Both Soj and YabA chase DnaA from oriC site, YabA tethers DnaA to the DNA replication fork via the beta sliding clamp subunit DnaN. SirA antagonizes the ability of DnaA to bind to the replication origin, and thus decreases replication inititation during sporulation. Small protein YqaH, part of the skin prophage-like element, binds to DnaA and antagonizes its replication initiation and transcriptional regulation activities. Its function is as follows. Plays an essential role in the initiation and regulation of chromosomal replication. ATP-DnaA binds to the origin of replication (oriC) to initiate formation of the DNA replication initiation complex once per cell cycle. Binds directly to oriC at a 9 bp consensus (DnaA box): 5'-TTATCCACA-3' and separates the double-stranded (ds)DNA. Forms a right-handed helical filament on oriC DNA; dsDNA binds to the exterior of the filament while single-stranded (ss)DNA is stabilized in the filament's interior. The ATP-DnaA-oriC complex binds and stabilizes one strand of the AT-rich DNA unwinding element (DUE or basal unwinding system, BUS), permitting loading of DNA polymerase. Binds ATP with high affinity, ADP with lower affinity, but not AMP, cAMP or cGMP; ATP stimulates binding to DnaA boxes. Once bound promotes sequence-specific strand separation of DnaA-trios (3'-GAT-5' consensus) adjacent to oriC in the presence of ATP but not ADP. Domains III and IV are sufficient to separate dsDNA strands. The 'initiator specific motif' (ISM) of domain III contacts the middle adenine residue of the DnaA-trio probably stretching and stabilizing ssDNA. DnaA-trio recognition is co-operative and depends on DnaA self-assembly. The ssDNA serves as an assembly region for the replication machinery. Tethered to DnaN (beta sliding clamp subunit of DNA polymerase) and thus replication forks by YabA. During replication initiation DnaA-ATP binds cooperatively to sequences in oriC. YabA prevents this cooperative binding while still allowing DnaA to bind DNA. During the cell cycle an initial phase occurs in which DnaA is associated with origin regions, then the origin regions become spatially separate from the centrally sequestered DnaA molecules, and most DnaA molecules are unable to reassociate with origin regions. Does not require YabA to bind DNA. During sporulation SirA prevents DnaA association with the replication origin to prevent excessive chromosome replication. Overexpression induces the SOS response; increasing expression of downstream dnaN blocks this induction. Over-initiation of DNA replication is very deleterious; isolated suppressors in relA, ndrR, dnaC, cshA and crrZ increase replication elongation, decrease replication inititation or lead to a decrease in the replicative DNA helicase. Binds acidic phospholipids. Functionally, the half-life of ADP-DnaA is 1.5 minutes, of ATP-DnaA is 5 minutes at 37 degrees Celsius; in E.coli the half-life of ADP-DnaA is about 45 minutes. In terms of biological role, also acts as a transcriptional regulator. DnaA inhibits its own gene expression. DnaA binds specifically to the promoter regions of at least 20 operons (56 genes), including itself, sda and dnaB, and probably controls their expression in response to DNA replication inhibition. The protein is Chromosomal replication initiator protein DnaA of Bacillus subtilis (strain 168).